Here is a 340-residue protein sequence, read N- to C-terminus: Tetraacyldisaccharide 4'-kinase (340 aa).

Position 51–58 (51–58) interacts with ATP; that stretch reads HMGGAGKT.

Belongs to the LpxK family.

The catalysed reaction is a lipid A disaccharide + ATP = a lipid IVA + ADP + H(+). It functions in the pathway glycolipid biosynthesis; lipid IV(A) biosynthesis; lipid IV(A) from (3R)-3-hydroxytetradecanoyl-[acyl-carrier-protein] and UDP-N-acetyl-alpha-D-glucosamine: step 6/6. Transfers the gamma-phosphate of ATP to the 4'-position of a tetraacyldisaccharide 1-phosphate intermediate (termed DS-1-P) to form tetraacyldisaccharide 1,4'-bis-phosphate (lipid IVA). The sequence is that of Tetraacyldisaccharide 4'-kinase from Rhodopseudomonas palustris (strain TIE-1).